Consider the following 677-residue polypeptide: DNA ligase (677 aa).

NAD(+) is bound by residues 35–39 (DAVYD), 84–85 (SL), and glutamate 115. Lysine 117 acts as the N6-AMP-lysine intermediate in catalysis. NAD(+) contacts are provided by arginine 138, glutamate 177, lysine 296, and lysine 320. The Zn(2+) site is built by cysteine 414, cysteine 417, cysteine 432, and cysteine 437. A BRCT domain is found at 599–677 (NGILKLNGKT…ETQLLEILEE (79 aa)).

It belongs to the NAD-dependent DNA ligase family. LigA subfamily. It depends on Mg(2+) as a cofactor. Mn(2+) is required as a cofactor.

The enzyme catalyses NAD(+) + (deoxyribonucleotide)n-3'-hydroxyl + 5'-phospho-(deoxyribonucleotide)m = (deoxyribonucleotide)n+m + AMP + beta-nicotinamide D-nucleotide.. DNA ligase that catalyzes the formation of phosphodiester linkages between 5'-phosphoryl and 3'-hydroxyl groups in double-stranded DNA using NAD as a coenzyme and as the energy source for the reaction. It is essential for DNA replication and repair of damaged DNA. The protein is DNA ligase of Nostoc sp. (strain PCC 7120 / SAG 25.82 / UTEX 2576).